A 155-amino-acid polypeptide reads, in one-letter code: Ribosomal RNA large subunit methyltransferase H (155 aa).

Residues leucine 72, glycine 103, and 122–127 (LSPLTL) contribute to the S-adenosyl-L-methionine site.

Belongs to the RNA methyltransferase RlmH family. As to quaternary structure, homodimer.

The protein resides in the cytoplasm. The enzyme catalyses pseudouridine(1915) in 23S rRNA + S-adenosyl-L-methionine = N(3)-methylpseudouridine(1915) in 23S rRNA + S-adenosyl-L-homocysteine + H(+). Specifically methylates the pseudouridine at position 1915 (m3Psi1915) in 23S rRNA. The sequence is that of Ribosomal RNA large subunit methyltransferase H from Actinobacillus pleuropneumoniae serotype 5b (strain L20).